The sequence spans 241 residues: 3-dehydroquinate dehydratase (241 aa).

3-dehydroquinate is bound by residues 35–37 (ELR) and R70. H132 functions as the Proton donor/acceptor in the catalytic mechanism. The Schiff-base intermediate with substrate role is filled by K159. R201 and Q224 together coordinate 3-dehydroquinate.

This sequence belongs to the type-I 3-dehydroquinase family. In terms of assembly, homodimer.

It carries out the reaction 3-dehydroquinate = 3-dehydroshikimate + H2O. It participates in metabolic intermediate biosynthesis; chorismate biosynthesis; chorismate from D-erythrose 4-phosphate and phosphoenolpyruvate: step 3/7. Its function is as follows. Involved in the third step of the chorismate pathway, which leads to the biosynthesis of aromatic amino acids. Catalyzes the cis-dehydration of 3-dehydroquinate (DHQ) and introduces the first double bond of the aromatic ring to yield 3-dehydroshikimate. In Staphylococcus carnosus (strain TM300), this protein is 3-dehydroquinate dehydratase.